The primary structure comprises 886 residues: Alanine--tRNA ligase (886 aa).

Zn(2+) is bound by residues His-568, His-572, Cys-670, and His-674.

This sequence belongs to the class-II aminoacyl-tRNA synthetase family. The cofactor is Zn(2+).

It localises to the cytoplasm. The enzyme catalyses tRNA(Ala) + L-alanine + ATP = L-alanyl-tRNA(Ala) + AMP + diphosphate. Its function is as follows. Catalyzes the attachment of alanine to tRNA(Ala) in a two-step reaction: alanine is first activated by ATP to form Ala-AMP and then transferred to the acceptor end of tRNA(Ala). Also edits incorrectly charged Ser-tRNA(Ala) and Gly-tRNA(Ala) via its editing domain. In Prochlorococcus marinus (strain NATL1A), this protein is Alanine--tRNA ligase.